A 560-amino-acid chain; its full sequence is Membrane protein insertase YidC (560 aa).

A run of 6 helical transmembrane segments spans residues 5–25 (IINL…WQYF), 334–354 (AIDF…MNFF), 357–377 (YVGN…LLMF), 431–451 (LPIL…YVTI), 476–496 (LFGL…WPIL), and 522–542 (FMPL…LIYW).

The protein belongs to the OXA1/ALB3/YidC family. Type 1 subfamily. Interacts with the Sec translocase complex via SecD. Specifically interacts with transmembrane segments of nascent integral membrane proteins during membrane integration.

The protein resides in the cell inner membrane. In terms of biological role, required for the insertion and/or proper folding and/or complex formation of integral membrane proteins into the membrane. Involved in integration of membrane proteins that insert both dependently and independently of the Sec translocase complex, as well as at least some lipoproteins. Aids folding of multispanning membrane proteins. This Rickettsia felis (strain ATCC VR-1525 / URRWXCal2) (Rickettsia azadi) protein is Membrane protein insertase YidC.